Reading from the N-terminus, the 454-residue chain is Serine/threonine-protein kinase NLK2 (454 aa).

The region spanning 67-356 (PEPDRPIGYG…AKDALAHPYL (290 aa)) is the Protein kinase domain. ATP contacts are provided by residues 73-81 (IGYGAFGVV) and Lys96. Asp193 functions as the Proton acceptor in the catalytic mechanism.

It belongs to the protein kinase superfamily. CMGC Ser/Thr protein kinase family. MAP kinase subfamily. Interacts with sox11, hmgxb4/hmg2l1, rnf138/narf, stat3.1 and mef2a. Mg(2+) is required as a cofactor.

Its subcellular location is the nucleus. The protein resides in the cytoplasm. The enzyme catalyses L-seryl-[protein] + ATP = O-phospho-L-seryl-[protein] + ADP + H(+). It carries out the reaction L-threonyl-[protein] + ATP = O-phospho-L-threonyl-[protein] + ADP + H(+). With respect to regulation, activated by tyrosine and threonine phosphorylation. Its function is as follows. Negatively regulates Wnt/beta-catenin-signaling during development. Plays a role together with sox11 in neural induction during early embryogenesis. Involved in TGFbeta-mediated mesoderm induction in early embryos, acting downstream of map3k7/tak1 to phosphorylate stat3. Augments the rnf138/narf-directed ubiquitination and degradation of tcf/lef by enhancing the association of rnf138/narf and tcf/lef. Phosphorylates mef2a to play a role in anterior neural development, including eye formation. The polypeptide is Serine/threonine-protein kinase NLK2 (nlk.2) (Xenopus tropicalis (Western clawed frog)).